The chain runs to 391 residues: Glycerophosphocholine acyltransferase 1 (391 aa).

Residues 1 to 66 are Cytoplasmic-facing; the sequence is MSNNEDPINE…IAKQAEEHES (66 aa). A helical transmembrane segment spans residues 67–87; sequence FINKVTHLLGVLGFGGFCFLL. The Lumenal portion of the chain corresponds to 88–92; that stretch reads GARPQ. Residues 93 to 113 form a helical membrane-spanning segment; the sequence is DIPYVYCLFFFIFVPLRWIYY. Topologically, residues 114–119 are cytoplasmic; that stretch reads RFKKWH. Residues 120–140 traverse the membrane as a helical segment; that stretch reads YFLLDFCYYANTIFLVDLLLY. Residues 141–144 lie on the Lumenal side of the membrane; that stretch reads PKDE. Residues 145 to 165 form a helical membrane-spanning segment; it reads KLFMVCFSFAEGPLAWALIVW. Residues 166 to 172 lie on the Cytoplasmic side of the membrane; sequence RCSLVFS. A helical transmembrane segment spans residues 173–193; sequence SVDKIVSVLIHLLPGLVFFTI. The Lumenal segment spans residues 194-226; it reads RWWNPATFEAMHPEGTSGRASWPYVEDKSFLFT. Residues 227 to 247 traverse the membrane as a helical segment; that stretch reads WLFLVPLVAYFLWQLLYFLIV. Topologically, residues 248 to 294 are cytoplasmic; the sequence is NVLRRQRLLRDPEVMTSYRELSKKAQKANNVWWRLSGLLGDQNRMLM. A helical transmembrane segment spans residues 295–315; the sequence is YILLQALFTVATTALTVPIFL. Over 316–318 the chain is Lumenal; that stretch reads SYE. Residues 319 to 339 traverse the membrane as a helical segment; that stretch reads LHAVFQILKVSAAVWNGGSFL. Over 340 to 391 the chain is Cytoplasmic; that stretch reads LDVMPRQVILKEKKKSELQPAHIQQYHSEPKQDQSPNSMEIRMKTIHSAEEQ. The segment at 354 to 391 is disordered; the sequence is KSELQPAHIQQYHSEPKQDQSPNSMEIRMKTIHSAEEQ. A compositionally biased stretch (basic and acidic residues) spans 380–391; it reads IRMKTIHSAEEQ.

The protein belongs to the GPC1 family.

Its subcellular location is the membrane. It carries out the reaction sn-glycerol 3-phosphocholine + an acyl-CoA = a monoacyl-sn-glycero-3-phosphocholine + CoA. The enzyme catalyses sn-glycero-3-phosphoethanolamine + an acyl-CoA = a monoacyl-sn-glycero-3-phosphoethanolamine + CoA. The catalysed reaction is sn-glycerol 3-phosphocholine + hexadecanoyl-CoA = hexadecanoyl-sn-glycero-3-phosphocholine + CoA. It catalyses the reaction (9Z)-hexadecenoyl-CoA + sn-glycerol 3-phosphocholine = (9Z-hexadecenoyl)-sn-glycero-3-phosphocholine + CoA. It carries out the reaction (9Z,12Z)-octadecadienoyl-CoA + sn-glycerol 3-phosphocholine = (9Z,12Z-octadecadienoyl)-sn-glycero-3-phosphocholine + CoA. The enzyme catalyses (12R)-hydroxy-(9Z)-octadecenoyl-CoA + sn-glycerol 3-phosphocholine = (12R-hydroxy-9Z-octadecenoyl)-sn-glycero-3-phosphocholine + CoA. The catalysed reaction is (9Z,12Z,15Z)-octadecatrienoyl-CoA + sn-glycerol 3-phosphocholine = (9Z,12Z,15Z-octadecatrienoyl)-sn-glycero-3-phosphocholine + CoA. It catalyses the reaction sn-glycerol 3-phosphocholine + (9Z)-octadecenoyl-CoA = (9Z-octadecenoyl)-sn-glycero-3-phosphocholine + CoA. In terms of biological role, glycerophosphocholine acyltransferase (GPCAT) that utilizes acyl-CoA to acylate glycero-3-phosphocholine (GPC), forming lysophosphatidylcholine (LPC). Shows broad acyl specificities with a preference for 16:0-CoA, polyunsaturated acyl-CoA, and the hydroxylated ricinoleoyl-CoA. Also catalyzes the acylation of glycero-3-phosphoethanolamine (GPE) with acyl-CoA. In addition to acyl-CoA, GPCAT efficiently utilizes LPC and lysophosphatidylethanolamine (LPE) as acyl donors in the acylation of GPC. Contributes to the maintenance of phosphatidylcholine (PC) homeostasis and might also have specific functions in acyl editing of PC, such as transferring acyl groups modified at the sn-2 position of PC to the sn-1. The protein is Glycerophosphocholine acyltransferase 1 of Ricinus communis (Castor bean).